Consider the following 224-residue polypeptide: Adenylate kinase (224 aa).

Position 10-15 (10-15 (GSGKGT)) interacts with ATP. The tract at residues 30–59 (ESGAIFRENISKGTELGAKAKEYIDRGDLV) is NMP. Residues Ser-31, Arg-36, 57 to 59 (DLV), 85 to 88 (GFPR), and Gln-92 contribute to the AMP site. Residues 126 to 165 (GRRLCVNDNNHPNNIFIDAIKPDGDKCRVCGGELKTRSDD) form an LID region. Arg-127 contributes to the ATP binding site. Residues Arg-162 and Arg-174 each contribute to the AMP site. Pro-211 provides a ligand contact to ATP.

The protein belongs to the adenylate kinase family. Monomer.

The protein localises to the cytoplasm. It carries out the reaction AMP + ATP = 2 ADP. The protein operates within purine metabolism; AMP biosynthesis via salvage pathway; AMP from ADP: step 1/1. Its function is as follows. Catalyzes the reversible transfer of the terminal phosphate group between ATP and AMP. Plays an important role in cellular energy homeostasis and in adenine nucleotide metabolism. This Desulfosudis oleivorans (strain DSM 6200 / JCM 39069 / Hxd3) (Desulfococcus oleovorans) protein is Adenylate kinase.